Consider the following 557-residue polypeptide: Urocanate hydratase (557 aa).

NAD(+)-binding positions include 53 to 54, Gln-131, 177 to 179, Asp-197, Arg-202, 243 to 244, 264 to 268, 274 to 275, and Tyr-323; these read GG, GMG, NA, QTSAH, and YL. The active site involves Cys-411. Gly-493 lines the NAD(+) pocket.

It belongs to the urocanase family. NAD(+) is required as a cofactor.

It is found in the cytoplasm. The catalysed reaction is 4-imidazolone-5-propanoate = trans-urocanate + H2O. It participates in amino-acid degradation; L-histidine degradation into L-glutamate; N-formimidoyl-L-glutamate from L-histidine: step 2/3. Its function is as follows. Catalyzes the conversion of urocanate to 4-imidazolone-5-propionate. The sequence is that of Urocanate hydratase from Hahella chejuensis (strain KCTC 2396).